Reading from the N-terminus, the 1483-residue chain is Guanylyl cyclase, membrane (1483 aa).

Transmembrane regions (helical) follow at residues 50–70, 143–163, 168–188, 198–218, 219–239, and 242–262; these read ISII…YISP, FILR…TFTA, LWKL…LIFE, MVLL…PSML, ASGG…QIAG, and MVLL…ISRF. Residues 323–376 are disordered; it reads KKDEESNLTGKKQSKVVVSPPPPPTAAAPQQQDNEISTPQNSRKIVDPQSPSSL. The segment covering 355–376 has biased composition (polar residues); that stretch reads DNEISTPQNSRKIVDPQSPSSL. Residues 395 to 517 enclose the Guanylate cyclase 1 domain; it reads TVLFCEIVNF…DTINTSSRMA (123 aa). Disordered regions lie at residues 598–619 and 672–838; these read NNTI…THPN and LTSP…GDDF. The span at 610-619 shows a compositional bias: polar residues; that stretch reads GSATGPTHPN. Low complexity-rich tracts occupy residues 672-684, 693-712, and 720-765; these read LTSP…PQQS, SPRL…SSST, and NNNN…NNNN. Polar residues predominate over residues 772–786; it reads SPISQNTTPTGSLSL. 6 consecutive transmembrane segments (helical) span residues 907–927, 982–1002, 1016–1036, 1040–1060, 1061–1081, and 1094–1114; these read ILAS…VDYF, IITG…YVVS, VVMV…SVPP, IPLD…CYNF, SGIK…FIEI, and IYLS…ITSY. In terms of domain architecture, Guanylate cyclase 2 spans 1168–1296; it reads TIFLSDIVGF…ESVQITQQME (129 aa). Mg(2+) is bound by residues Asp1173, Ile1174, and Asp1217. Disordered regions lie at residues 1348–1369 and 1393–1483; these read QPEV…SLQY and NQND…SESS. Residues 1354–1369 show a composition bias toward polar residues; the sequence is RSVSVSKSNFGGSLQY. Positions 1405-1416 are enriched in low complexity; sequence NENGNESSSSNI. Residues 1432–1444 are compositionally biased toward acidic residues; it reads NEDDESSYEDDQE. Residues 1446-1465 are compositionally biased toward low complexity; that stretch reads NQYLNNSENNKNNNNNSNQI.

The protein belongs to the adenylyl cyclase class-4/guanylyl cyclase family. Homodimer. Mg(2+) serves as cofactor.

The protein resides in the membrane. The enzyme catalyses GTP = 3',5'-cyclic GMP + diphosphate. Its activity is regulated as follows. Activated by guanosine 5'-3-O-(thio)triphosphate (GTPgammaS). Inhibited by calcium. Synthesizes cyclic GMP (cGMP) from GTP, after activation by heterotrimeric or monomeric G proteins. Involved in chemotaxis. This is Guanylyl cyclase, membrane (gca) from Dictyostelium discoideum (Social amoeba).